Here is a 177-residue protein sequence, read N- to C-terminus: UPF0114 protein HP_0189 (177 aa).

The next 3 helical transmembrane spans lie at 15 to 35 (WLLA…GYVF), 54 to 74 (LVLS…VLMV), and 145 to 165 (PIFW…LAAV).

Belongs to the UPF0114 family.

The protein localises to the cell membrane. This is UPF0114 protein HP_0189 from Helicobacter pylori (strain ATCC 700392 / 26695) (Campylobacter pylori).